A 551-amino-acid polypeptide reads, in one-letter code: Palmdelphin (551 aa).

An N-acetylmethionine modification is found at methionine 1. Residues 2-106 (EEAELVKERL…LQISTNEEAI (105 aa)) adopt a coiled-coil conformation. Lysine 125 participates in a covalent cross-link: Glycyl lysine isopeptide (Lys-Gly) (interchain with G-Cter in SUMO2). At serine 135 the chain carries Phosphoserine. Lysine 179 is covalently cross-linked (Glycyl lysine isopeptide (Lys-Gly) (interchain with G-Cter in SUMO1); alternate). Residue lysine 179 forms a Glycyl lysine isopeptide (Lys-Gly) (interchain with G-Cter in SUMO2); alternate linkage. Basic and acidic residues predominate over residues 247–259 (SERNSKSPTEYHD). Disordered stretches follow at residues 247–393 (SERN…EDEE) and 450–529 (EEEE…IAGD). Threonine 271 carries the phosphothreonine modification. Phosphoserine occurs at positions 321, 370, 384, and 385. Residues 484-495 (KRAEVNPHENTN) show a composition bias toward basic and acidic residues. Serine 498, serine 515, and serine 520 each carry phosphoserine.

Belongs to the paralemmin family. As to quaternary structure, interacts with GLUL. Cell projection, dendrite. Cell projection, dendritic spine. In terms of processing, phosphorylated.

It localises to the cytoplasm. Its subcellular location is the cell projection. The protein resides in the dendrite. The protein localises to the dendritic spine. In Sus scrofa (Pig), this protein is Palmdelphin (PALMD).